Consider the following 432-residue polypeptide: MQVSVETTQGLGRRVTITIAADSIETAVKSELVNVAKKVRIDGFRKGKVPMNIVAQRYGASVRQDVLGDLMSRNFVDAIIKEKINPAGAPNYVPGEYKVGEDFTYSVEFEVYPEVELTGLESIEVEKPVVEVTDADVDVMLDTLRKQQATWKEKDGAADAEDRVTIDFTGSVDGEEFEGGKATDFVLAMGQGRMIPGFEDGVKGHKAGEEFTIDVTFPEEYHAENLKGKAAKFVINLKKVEERELPELTEEFIKRFGVEDGSVAGLRAEVRKNMERELKGAVRNRVKSQAIEGLVKANDIDVPAALIDSEIDVLRRQAAQRFGGNEKQALELPRELFEEQAKRRVVVGLLLGEVIRTNELKADEERVKGLIEEMASAYEDPKEVIEFYSKNKELMDNMRNVALEEQAVEAVLAKAKVSEKATSFNELMNQQA.

A PPIase FKBP-type domain is found at 161-246 (EDRVTIDFTG…LKKVEERELP (86 aa)).

Belongs to the FKBP-type PPIase family. Tig subfamily.

The protein localises to the cytoplasm. The catalysed reaction is [protein]-peptidylproline (omega=180) = [protein]-peptidylproline (omega=0). Involved in protein export. Acts as a chaperone by maintaining the newly synthesized protein in an open conformation. Functions as a peptidyl-prolyl cis-trans isomerase. The protein is Trigger factor of Salmonella schwarzengrund (strain CVM19633).